Here is a 287-residue protein sequence, read N- to C-terminus: uncharacterized protein (287 aa).

Helical transmembrane passes span 27–47 (LTFS…FGVQ), 66–86 (LGTI…VTAF), 97–117 (WFWG…GVLL), 135–155 (IVFA…LSAL), 171–191 (IFIW…VLNF), 205–225 (LFPG…VYFV), and 254–274 (SALF…YFIL).

The protein localises to the cell membrane. This is an uncharacterized protein from Mycoplasma pneumoniae (strain ATCC 29342 / M129 / Subtype 1) (Mycoplasmoides pneumoniae).